The primary structure comprises 490 residues: Probable cytosol aminopeptidase (490 aa).

The Mn(2+) site is built by K260 and D265. The active site involves K272. Residues D284, D343, and E345 each coordinate Mn(2+). R347 is a catalytic residue.

This sequence belongs to the peptidase M17 family. Requires Mn(2+) as cofactor.

It localises to the cytoplasm. The catalysed reaction is Release of an N-terminal amino acid, Xaa-|-Yaa-, in which Xaa is preferably Leu, but may be other amino acids including Pro although not Arg or Lys, and Yaa may be Pro. Amino acid amides and methyl esters are also readily hydrolyzed, but rates on arylamides are exceedingly low.. It catalyses the reaction Release of an N-terminal amino acid, preferentially leucine, but not glutamic or aspartic acids.. Functionally, presumably involved in the processing and regular turnover of intracellular proteins. Catalyzes the removal of unsubstituted N-terminal amino acids from various peptides. The protein is Probable cytosol aminopeptidase of Gloeothece citriformis (strain PCC 7424) (Cyanothece sp. (strain PCC 7424)).